Consider the following 271-residue polypeptide: Neurexophilin-1 (271 aa).

Residues 1-21 (MQAACWYVLLLLQPTVYLVTC) form the signal peptide. Residues 22-97 (ANLTNGGKSE…WDWLRNSTDL (76 aa)) are II. 6 N-linked (GlcNAc...) asparagine glycosylation sites follow: Asn23, Asn68, Asn93, Asn146, Asn156, and Asn162. Residues 98–176 (QEPRPRAKRR…LVPPTKIVEF (79 aa)) are III. The segment at 177–185 (DLAQQTVID) is IV (linker domain). The interval 186–271 (AKDSKSFNCR…HSDTPYFPSG (86 aa)) is v (Cys-rich).

It belongs to the neurexophilin family. Post-translationally, may be proteolytically processed at the boundary between the N-terminal non-conserved and the central conserved domain in neuron-like cells.

Its subcellular location is the secreted. May be signaling molecules that resemble neuropeptides. Ligand for alpha-neurexins. The chain is Neurexophilin-1 (NXPH1) from Bos taurus (Bovine).